The following is a 181-amino-acid chain: Mating-type M-specific polypeptide Mc (181 aa).

Positions 103 to 171 (TPRPPNAFIL…QHQKMYPGYK (69 aa)) form a DNA-binding region, HMG box.

The protein localises to the nucleus. In terms of biological role, mating type proteins are sequence specific DNA-binding proteins that act as master switches in yeast differentiation by controlling gene expression in a cell type-specific fashion. Positive regulator of MFM genes. The HMG box recognizes the DNA sequence 5'-AACAAAG-3'. Required for conjugation and efficient meiosis. This chain is Mating-type M-specific polypeptide Mc (matMc), found in Schizosaccharomyces kambucha (Fission yeast).